The following is an 806-amino-acid chain: Dimethyl sulfoxide reductase DmsA (806 aa).

Residues 1-35 (MSNFNQISRRDFVKASSAGAALAVSNLTLPFNVMA) constitute a signal peptide (tat-type signal). Positions 47 to 109 (ERIVWSACTV…SMRRRVYNPD (63 aa)) constitute a 4Fe-4S Mo/W bis-MGD-type domain. Residues C54, C58, C62, and C95 each coordinate [4Fe-4S] cluster. Mo-bis(molybdopterin guanine dinucleotide) contacts are provided by residues 163–167 (LGGTM), S196, 236–237 (ET), 262–263 (ID), 283–285 (GTD), 378–379 (WG), R382, N480, 504–505 (ID), H693, 699–701 (HST), N780, and 796–797 (QH). The tract at residues 786–806 (RPSPLAKGNPQHSNLVQVERL) is disordered. Over residues 795-806 (PQHSNLVQVERL) the composition is skewed to polar residues.

It belongs to the prokaryotic molybdopterin-containing oxidoreductase family. As to quaternary structure, heterotrimeric enzyme composed of a catalytic heterodimer (DmsAB) and a membrane anchor protein (DmsC). Requires [4Fe-4S] cluster as cofactor. The cofactor is Mo-bis(molybdopterin guanine dinucleotide). Post-translationally, predicted to be exported by the Tat system. The position of the signal peptide cleavage has not been experimentally proven.

The protein resides in the cell membrane. The enzyme catalyses dimethyl sulfide + a menaquinone + H2O = dimethyl sulfoxide + a menaquinol. In terms of biological role, catalyzes the reduction of dimethyl sulfoxide (DMSO) to dimethyl sulfide (DMS). The terminal DMSO reductase can also use various sulfoxides and N-oxide compounds as terminal electron acceptor in addition to DMSO. This is Dimethyl sulfoxide reductase DmsA (dmsA) from Haemophilus influenzae (strain ATCC 51907 / DSM 11121 / KW20 / Rd).